The sequence spans 229 residues: Putative N-acetylmannosamine-6-phosphate 2-epimerase (229 aa).

This sequence belongs to the NanE family.

The enzyme catalyses an N-acyl-D-glucosamine 6-phosphate = an N-acyl-D-mannosamine 6-phosphate. It participates in amino-sugar metabolism; N-acetylneuraminate degradation; D-fructose 6-phosphate from N-acetylneuraminate: step 3/5. Its function is as follows. Converts N-acetylmannosamine-6-phosphate (ManNAc-6-P) to N-acetylglucosamine-6-phosphate (GlcNAc-6-P). This chain is Putative N-acetylmannosamine-6-phosphate 2-epimerase, found in Actinobacillus pleuropneumoniae serotype 3 (strain JL03).